A 305-amino-acid polypeptide reads, in one-letter code: MLDKLTHLKQLEAESIHIIREVAAEFDNPVMLYSIGKDSAVMLHLARKAFFPGKLPFPVLHVDTRWKFQEMYRFREKMVSEMGLELITHINPDGVAQDMNPFTYGSAKHTDVMKTEGLKQALDKYGFDAAFGGARRDEEKSRAKERVYSFRDSKHRWDPKNQRPELWNVYNGKVKKGESIRVFPLSNWTELDIWQYIYLEQIPIVPLYFAAEREVVELNGTLVMIDDERILNYLTPEQKASIHKKMVRFRTLGCYPLTGAVESTAATLPDIIQEMLLTKTSERQGRVIDHDAAGSMEEKKRQGYF.

The protein belongs to the PAPS reductase family. CysD subfamily. Heterodimer composed of CysD, the smaller subunit, and CysN.

The catalysed reaction is sulfate + ATP + H(+) = adenosine 5'-phosphosulfate + diphosphate. The protein operates within sulfur metabolism; hydrogen sulfide biosynthesis; sulfite from sulfate: step 1/3. With CysN forms the ATP sulfurylase (ATPS) that catalyzes the adenylation of sulfate producing adenosine 5'-phosphosulfate (APS) and diphosphate, the first enzymatic step in sulfur assimilation pathway. APS synthesis involves the formation of a high-energy phosphoric-sulfuric acid anhydride bond driven by GTP hydrolysis by CysN coupled to ATP hydrolysis by CysD. The polypeptide is Sulfate adenylyltransferase subunit 2 (Ectopseudomonas mendocina (strain ymp) (Pseudomonas mendocina)).